The chain runs to 521 residues: MSL complex subunit 3 (521 aa).

A Tudor-knot domain is found at 13 to 71 (SGEKVLCFEPDPTKARVLYDAKIVDVIVGKDEKGRKIPEYLIHFNGWNRSWDRWAAEDH). Disordered stretches follow at residues 114-166 (KGLP…TRRE) and 298-409 (ATST…PSKE). Over residues 139–149 (KDEEISEESDI) the composition is skewed to acidic residues. The segment covering 150-166 (EEKTEVKEEPELQTRRE) has biased composition (basic and acidic residues). Residues 168–517 (EERTITIEIP…CEAHYSTKNP (350 aa)) enclose the MRG domain. The required for the histone acetyltransferase activity of the MSL complex stretch occupies residues 290–440 (FFLPIKESAT…WKLVPDNYPP (151 aa)). 2 positions are modified to phosphoserine: S309 and S311. Over residues 316-329 (NPSTPQSTESQPTT) the composition is skewed to low complexity. A phosphoserine mark is found at S367 and S400. T405 is modified (phosphothreonine). Phosphoserine occurs at positions 407 and 411.

In terms of assembly, component of the MSL histone acetyltransferase complex at least composed of the KAT8/MOF, MSL1/hampin, MSL2 and MSL3. Interacts (via the MRG domain) with MSL1 and KAT8/MOF. As to expression, expressed in many tissues including liver, pancreas, heart, lung, kidney, skeletal muscle, brain, and placenta, with highest expression in skeletal muscle and heart.

Its subcellular location is the nucleus. Its function is as follows. Non-catalytic component of the MSL histone acetyltransferase complex, a multiprotein complex that mediates the majority of histone H4 acetylation at 'Lys-16' (H4K16ac), an epigenetic mark that prevents chromatin compaction. The MSL complex is required for chromosome stability and genome integrity by maintaining homeostatic levels of H4K16ac. The MSL complex is also involved in gene dosage by promoting up-regulation of genes expressed by the X chromosome. X up-regulation is required to compensate for autosomal biallelic expression. The MSL complex also participates in gene dosage compensation by promoting expression of Tsix non-coding RNA. Acts as a histone reader that specifically recognizes and binds histone H4 monomethylated at 'Lys-20' (H4K20Me1) in a DNA-dependent manner and is proposed to be involved in chromosomal targeting of the MSL complex. May play a role X inactivation in females. In Homo sapiens (Human), this protein is MSL complex subunit 3.